Here is a 233-residue protein sequence, read N- to C-terminus: DNA repair protein RecO (233 aa).

Belongs to the RecO family.

Involved in DNA repair and RecF pathway recombination. The polypeptide is DNA repair protein RecO (Pseudomonas paraeruginosa (strain DSM 24068 / PA7) (Pseudomonas aeruginosa (strain PA7))).